The following is a 271-amino-acid chain: Protein PXR1 (271 aa).

The G-patch domain maps to 25–72 (TSRFGHQFLEKFGWKPGMGLGLYPMNSNTSHIKVSIKDDNVGLGAKLK). The segment at 147–239 (SNAKKRKREG…SASNIPDAVN (93 aa)) is disordered. The segment covering 157–168 (DDSEDEDDDDKE) has biased composition (acidic residues). Residues 175–203 (KKHKKHKKHKKDKKKDKKDKKEHKKHKKE) are compositionally biased toward basic residues. Basic and acidic residues predominate over residues 204 to 221 (EKRLKKEKRAEKTKETKK). A Phosphoserine modification is found at serine 230.

The protein belongs to the PINX1 family. In terms of assembly, interacts with EST2.

It is found in the nucleus. The protein resides in the nucleolus. Involved in rRNA-processing at A0, A1 and A2 sites through its action in U18 and U24 snoRNA 3'-end final trimming. Negative regulator of telomerase throughX competition for binding to EST2 with TLC1. This is Protein PXR1 (PXR1) from Saccharomyces cerevisiae (strain YJM789) (Baker's yeast).